The primary structure comprises 392 residues: Zinc finger protein ham-2 (392 aa).

2 consecutive C2H2-type zinc fingers follow at residues 16 to 39 (FPCS…MQAH) and 43 to 66 (YTCT…YRVH). A C2H2-type 3; degenerate zinc finger spans residues 72–95 (FMCRCCNWAFPDKTSLHIHMQSML). Disordered regions lie at residues 106–130 (LAKS…PFSP) and 278–303 (HISH…HSGE). Residues 112-123 (VVDSTSESGSPR) show a composition bias toward polar residues. Positions 289–303 (SDSHISGGSSSHSGE) are enriched in low complexity.

The protein resides in the nucleus. In terms of biological role, probable transcription factor that acts downstream of egl-15, to promote migration of the HSN motor neurons from the tail to the gonad primordium during HSN cell differentiation. The protein is Zinc finger protein ham-2 of Caenorhabditis elegans.